The primary structure comprises 132 residues: UPF0299 membrane protein KPN78578_25390 (132 aa).

4 helical membrane-spanning segments follow: residues 5–25, 38–60, 66–86, and 93–113; these read LTIIWQYLRAFVLIYACLYAG, GSIIGMLILFVLLALQIMPPQWV, ILIRYMALLFVPIGVGVMQYW, and LGPVVISCAISTLVVFVVVSW.

The protein belongs to the UPF0299 family.

The protein localises to the cell inner membrane. The chain is UPF0299 membrane protein KPN78578_25390 from Klebsiella pneumoniae subsp. pneumoniae (strain ATCC 700721 / MGH 78578).